Here is a 257-residue protein sequence, read N- to C-terminus: Imidazole glycerol phosphate synthase subunit HisF (257 aa).

Catalysis depends on residues Asp-11 and Asp-130.

It belongs to the HisA/HisF family. In terms of assembly, heterodimer of HisH and HisF.

It is found in the cytoplasm. It catalyses the reaction 5-[(5-phospho-1-deoxy-D-ribulos-1-ylimino)methylamino]-1-(5-phospho-beta-D-ribosyl)imidazole-4-carboxamide + L-glutamine = D-erythro-1-(imidazol-4-yl)glycerol 3-phosphate + 5-amino-1-(5-phospho-beta-D-ribosyl)imidazole-4-carboxamide + L-glutamate + H(+). The protein operates within amino-acid biosynthesis; L-histidine biosynthesis; L-histidine from 5-phospho-alpha-D-ribose 1-diphosphate: step 5/9. Functionally, IGPS catalyzes the conversion of PRFAR and glutamine to IGP, AICAR and glutamate. The HisF subunit catalyzes the cyclization activity that produces IGP and AICAR from PRFAR using the ammonia provided by the HisH subunit. This Shewanella sp. (strain MR-4) protein is Imidazole glycerol phosphate synthase subunit HisF.